We begin with the raw amino-acid sequence, 220 residues long: Ribosome biogenesis protein 15 (220 aa).

The disordered stretch occupies residues Met-1–Asp-82. Basic and acidic residues predominate over residues Ser-9 to Leu-30. Residues Ser-39 to Gln-60 show a composition bias toward acidic residues. The region spanning Gly-91–Lys-169 is the RRM domain.

As to quaternary structure, component of the pre-66S ribosomal particle. Interacts with NOP7 and RRP1.

Its subcellular location is the cytoplasm. The protein localises to the nucleus. It localises to the nucleolus. Involved in the biogenesis of the 60S ribosomal subunit. Required for pre-rRNA processing and cytokinesis. Associates with the precursors of the 25S and 5.8S rRNAs. In Saccharomyces cerevisiae (strain ATCC 204508 / S288c) (Baker's yeast), this protein is Ribosome biogenesis protein 15.